The following is a 414-amino-acid chain: Phthiocerol/phthiodiolone dimycocerosyl transferase (414 aa).

The Proton acceptor role is filled by His-118.

The protein belongs to the acyltransferase PapA5 family. Monomer. Interacts directly with the acyl carrier protein (ACP) domain of the mycocerosic acid synthase (mas) protein.

It carries out the reaction 2 a mycocerosyl-[mycocerosic acid synthase] + a phthiocerol = a dimycocerosyl phthiocerol + 2 holo-[mycocerosic acid synthase].. The enzyme catalyses 2 a mycocerosyl-[mycocerosic acid synthase] + a phthiodiolone = a dimycocerosyl phthiodiolone + 2 holo-[mycocerosic acid synthase].. It catalyses the reaction 2 a mycocerosyl-[mycocerosic acid synthase] + a phenolphthiocerol = a dimycocerosyl phenolphthiocerol + 2 holo-[mycocerosic acid synthase].. Functionally, catalyzes diesterification of phthiocerol, phthiodiolone, and phenolphthiocerol with mycocerosic acids, the final step in the phthiocerol, phthiodiolone and phenolphthiocerol dimycocerosate esters (PDIM) synthesis. Can directly transfer the mycocerosate bound to the mycocerosic acid synthase (mas) onto the substrate alcohols. The protein is Phthiocerol/phthiodiolone dimycocerosyl transferase (papA5) of Mycobacterium ulcerans (strain Agy99).